The chain runs to 121 residues: Large ribosomal subunit protein bL12 (121 aa).

This sequence belongs to the bacterial ribosomal protein bL12 family. As to quaternary structure, homodimer. Part of the ribosomal stalk of the 50S ribosomal subunit. Forms a multimeric L10(L12)X complex, where L10 forms an elongated spine to which 2 to 4 L12 dimers bind in a sequential fashion. Binds GTP-bound translation factors.

In terms of biological role, forms part of the ribosomal stalk which helps the ribosome interact with GTP-bound translation factors. Is thus essential for accurate translation. In Xanthomonas campestris pv. campestris (strain B100), this protein is Large ribosomal subunit protein bL12.